A 121-amino-acid polypeptide reads, in one-letter code: Small ribosomal subunit protein uS13 (121 aa).

The segment at Val97–Lys121 is disordered. Positions Gln100–Lys121 are enriched in basic residues.

Belongs to the universal ribosomal protein uS13 family. In terms of assembly, part of the 30S ribosomal subunit. Forms a loose heterodimer with protein S19. Forms two bridges to the 50S subunit in the 70S ribosome.

In terms of biological role, located at the top of the head of the 30S subunit, it contacts several helices of the 16S rRNA. In the 70S ribosome it contacts the 23S rRNA (bridge B1a) and protein L5 of the 50S subunit (bridge B1b), connecting the 2 subunits; these bridges are implicated in subunit movement. Contacts the tRNAs in the A and P-sites. This chain is Small ribosomal subunit protein uS13, found in Prochlorococcus marinus (strain NATL1A).